Reading from the N-terminus, the 84-residue chain is UPF0320 protein YNR077C (84 aa).

It belongs to the UPF0320 family.

This chain is UPF0320 protein YNR077C, found in Saccharomyces cerevisiae (strain ATCC 204508 / S288c) (Baker's yeast).